Consider the following 103-residue polypeptide: ATP synthase F(0) complex subunit g, mitochondrial (103 aa).

A2 bears the N-acetylalanine mark. K11, K24, K35, and K54 each carry N6-acetyllysine.

This sequence belongs to the ATPase g subunit family. Component of the ATP synthase complex composed at least of ATP5F1A/subunit alpha, ATP5F1B/subunit beta, ATP5MC1/subunit c (homooctomer), MT-ATP6/subunit a, MT-ATP8/subunit 8, ATP5ME/subunit e, ATP5MF/subunit f, ATP5MG/subunit g, ATP5MK/subunit k, ATP5MJ/subunit j, ATP5F1C/subunit gamma, ATP5F1D/subunit delta, ATP5F1E/subunit epsilon, ATP5PF/subunit F6, ATP5PB/subunit b, ATP5PD/subunit d, ATP5PO/subunit OSCP. ATP synthase complex consists of a soluble F(1) head domain (subunits alpha(3) and beta(3)) - the catalytic core - and a membrane F(0) domain - the membrane proton channel (subunits c, a, 8, e, f, g, k and j). These two domains are linked by a central stalk (subunits gamma, delta, and epsilon) rotating inside the F1 region and a stationary peripheral stalk (subunits F6, b, d, and OSCP).

It is found in the mitochondrion. Its subcellular location is the mitochondrion inner membrane. In terms of biological role, subunit g, of the mitochondrial membrane ATP synthase complex (F(1)F(0) ATP synthase or Complex V) that produces ATP from ADP in the presence of a proton gradient across the membrane which is generated by electron transport complexes of the respiratory chain. ATP synthase complex consist of a soluble F(1) head domain - the catalytic core - and a membrane F(1) domain - the membrane proton channel. These two domains are linked by a central stalk rotating inside the F(1) region and a stationary peripheral stalk. During catalysis, ATP synthesis in the catalytic domain of F(1) is coupled via a rotary mechanism of the central stalk subunits to proton translocation. In vivo, can only synthesize ATP although its ATP hydrolase activity can be activated artificially in vitro. Part of the complex F(0) domain. The polypeptide is ATP synthase F(0) complex subunit g, mitochondrial (Pongo abelii (Sumatran orangutan)).